We begin with the raw amino-acid sequence, 244 residues long: Methanethiol S-methyltransferase (244 aa).

5 helical membrane passes run 7-27, 41-61, 90-110, 120-140, and 181-201; these read IIYG…AIGF, IAAP…VFAV, LLAS…PAVI, VALW…TFMI, and GFVV…LFAI.

Belongs to the nurim family.

It localises to the membrane. It catalyses the reaction methanethiol + S-adenosyl-L-methionine = dimethyl sulfide + S-adenosyl-L-homocysteine + H(+). Functionally, catalyzes the methylation of methanethiol (MeSH) to yield dimethylsulphide (DMS). The protein is Methanethiol S-methyltransferase of Mycobacterium tuberculosis (strain ATCC 25618 / H37Rv).